The following is a 637-amino-acid chain: Biosynthetic arginine decarboxylase (637 aa).

Residue lysine 101 is modified to N6-(pyridoxal phosphate)lysine. 286-296 (FDVGGGLAVDY) is a substrate binding site.

The protein belongs to the Orn/Lys/Arg decarboxylase class-II family. SpeA subfamily. Mg(2+) is required as a cofactor. The cofactor is pyridoxal 5'-phosphate.

It catalyses the reaction L-arginine + H(+) = agmatine + CO2. The protein operates within amine and polyamine biosynthesis; agmatine biosynthesis; agmatine from L-arginine: step 1/1. Catalyzes the biosynthesis of agmatine from arginine. This is Biosynthetic arginine decarboxylase from Shewanella baltica (strain OS223).